Reading from the N-terminus, the 608-residue chain is Amino-acid acetyltransferase, mitochondrial (608 aa).

The 203-residue stretch at 402–604 (LNLITEHEKG…DICTRIEPSL (203 aa)) folds into the N-acetyltransferase domain.

The protein belongs to the acetyltransferase family.

Its subcellular location is the mitochondrion. It catalyses the reaction L-glutamate + acetyl-CoA = N-acetyl-L-glutamate + CoA + H(+). It functions in the pathway amino-acid biosynthesis; L-arginine biosynthesis; N(2)-acetyl-L-ornithine from L-glutamate: step 1/4. N-acetylglutamate synthase involved in arginine biosynthesis. The polypeptide is Amino-acid acetyltransferase, mitochondrial (ARG2) (Yarrowia lipolytica (strain CLIB 122 / E 150) (Yeast)).